The primary structure comprises 1508 residues: Gem-associated protein 5 (1508 aa).

Residues 1 to 124 are important for interaction with U1 snRNA; that stretch reads MGQEPRTLPP…LHWSPRVKDL (124 aa). The interaction with U4 snRNA stretch occupies residues 13–15; the sequence is NWY. Phosphoserine is present on Ser-48. Thr-51 carries the post-translational modification Phosphothreonine. WD repeat units follow at residues 62-104, 107-148, 150-189, 193-264, 280-321, 333-374, 377-417, 424-464, 468-509, 533-573, and 576-622; these read GHTE…VVTE, LHQH…QHLF, EPRT…EVIH, GHDD…GVMI, TVKE…RRKY, HSRI…CSWT, SLGG…NNYD, GVKS…PPQI, YHKK…IVLQ, KYKL…LICT, and QHHK…ESSP. Position 624 is a phosphoserine (Ser-624). 2 WD repeats span residues 637–677 and 680–720; these read GHTA…PLCN and GHRG…HSRP. The segment at 715–790 is disordered; sequence QDHSRPPQGK…EGEEQAREPE (76 aa). Residues 739–748 are compositionally biased toward basic residues; the sequence is AKPKKKKKPT. Thr-751 bears the Phosphothreonine mark. Lys-754 participates in a covalent cross-link: Glycyl lysine isopeptide (Lys-Gly) (interchain with G-Cter in SUMO2). A phosphoserine mark is found at Ser-757, Ser-770, Ser-778, and Ser-847. 2 disordered regions span residues 1313–1343 and 1389–1428; these read EPSQ…ELDL and QKSQ…KNEP. Positions 1362-1393 form a coiled coil; sequence EKHASLQNSQRTVAEVQETLAEMIRQHQKSQL. A compositionally biased stretch (polar residues) spans 1390-1399; it reads KSQLCKSTAN.

This sequence belongs to the WD repeat gemin-5 family. Part of the core SMN complex that contains SMN1, GEMIN2/SIP1, DDX20/GEMIN3, GEMIN4, GEMIN5, GEMIN6, GEMIN7, GEMIN8 and STRAP/UNRIP. Part of the SMN-Sm complex that contains SMN1, GEMIN2/SIP1, DDX20/GEMIN3, GEMIN4, GEMIN5, GEMIN6, GEMIN7, GEMIN8, STRAP/UNRIP and the Sm proteins SNRPB, SNRPD1, SNRPD2, SNRPD3, SNRPE, SNRPF and SNRPG. Interacts with GEMIN2; the interaction is direct. Interacts with SMN1, SNRPB, SNRPD1, SNRPD2, SNRPD3 and SNRPE; the interaction is direct. Interacts with cytosolic DDX20/GEMIN3 and GEMIN4. Interacts with SNRNP70 and HNRNPU. Identified in a complex with 80S ribosomes; binds to the 60S large ribosomal subunit. Interacts with the ribosomal subunits RPL3 and RPL4.

Its subcellular location is the nucleus. The protein resides in the nucleoplasm. The protein localises to the gem. It is found in the cytoplasm. Functionally, the SMN complex catalyzes the assembly of small nuclear ribonucleoproteins (snRNPs), the building blocks of the spliceosome, and thereby plays an important role in the splicing of cellular pre-mRNAs. Most spliceosomal snRNPs contain a common set of Sm proteins SNRPB, SNRPD1, SNRPD2, SNRPD3, SNRPE, SNRPF and SNRPG that assemble in a heptameric protein ring on the Sm site of the small nuclear RNA to form the core snRNP (Sm core). In the cytosol, the Sm proteins SNRPD1, SNRPD2, SNRPE, SNRPF and SNRPG are trapped in an inactive 6S pICln-Sm complex by the chaperone CLNS1A that controls the assembly of the core snRNP. To assemble core snRNPs, the SMN complex accepts the trapped 5Sm proteins from CLNS1A forming an intermediate. Binding of snRNA inside 5Sm ultimately triggers eviction of the SMN complex, thereby allowing binding of SNRPD3 and SNRPB to complete assembly of the core snRNP. Within the SMN complex, GEMIN5 recognizes and delivers the small nuclear RNAs (snRNAs) to the SMN complex. Binds to the 7-methylguanosine cap of RNA molecules. Binds to the 3'-UTR of SMN1 mRNA and regulates its translation; does not affect mRNA stability. May play a role in the regulation of protein synthesis via its interaction with ribosomes. The sequence is that of Gem-associated protein 5 (GEMIN5) from Homo sapiens (Human).